The following is a 1446-amino-acid chain: DNA-directed RNA polymerase subunit beta'' (1446 aa).

Zn(2+)-binding residues include Cys217, Cys285, Cys292, and Cys295.

It belongs to the RNA polymerase beta' chain family. RpoC2 subfamily. In terms of assembly, in plastids the minimal PEP RNA polymerase catalytic core is composed of four subunits: alpha, beta, beta', and beta''. When a (nuclear-encoded) sigma factor is associated with the core the holoenzyme is formed, which can initiate transcription. Zn(2+) is required as a cofactor.

Its subcellular location is the plastid. The protein resides in the chloroplast. The catalysed reaction is RNA(n) + a ribonucleoside 5'-triphosphate = RNA(n+1) + diphosphate. Its function is as follows. DNA-dependent RNA polymerase catalyzes the transcription of DNA into RNA using the four ribonucleoside triphosphates as substrates. This Thalassiosira pseudonana (Marine diatom) protein is DNA-directed RNA polymerase subunit beta''.